A 162-amino-acid chain; its full sequence is Auracyanin-A (162 aa).

Residues Met1 to Ala22 form the signal peptide. Cys23 carries N-palmitoyl cysteine lipidation. Residue Cys23 is the site of S-diacylglycerol cysteine attachment. One can recognise a Plastocyanin-like domain in the interval Val42–Asn162. His81, Cys146, His151, and Met155 together coordinate Cu cation.

In terms of assembly, monomer. Requires Cu cation as cofactor.

The protein resides in the cell membrane. In terms of biological role, probably a soluble electron acceptor for the integral membrane protein electron transfer alternative complex III (ACIII). The polypeptide is Auracyanin-A (Chloroflexus aurantiacus (strain ATCC 29366 / DSM 635 / J-10-fl)).